Reading from the N-terminus, the 646-residue chain is Threonine--tRNA ligase (646 aa).

The 61-residue stretch at 1–61 (MIKITFPDGS…NEDADFVLYK (61 aa)) folds into the TGS domain. Residues 242–541 (DHRKIGKEMQ…LIEHTAGKFP (300 aa)) form a catalytic region. Residues Cys337, His388, and His518 each coordinate Zn(2+).

The protein belongs to the class-II aminoacyl-tRNA synthetase family. Homodimer. Zn(2+) is required as a cofactor.

The protein localises to the cytoplasm. The enzyme catalyses tRNA(Thr) + L-threonine + ATP = L-threonyl-tRNA(Thr) + AMP + diphosphate + H(+). Functionally, catalyzes the attachment of threonine to tRNA(Thr) in a two-step reaction: L-threonine is first activated by ATP to form Thr-AMP and then transferred to the acceptor end of tRNA(Thr). Also edits incorrectly charged L-seryl-tRNA(Thr). This is Threonine--tRNA ligase from Bacteroides thetaiotaomicron (strain ATCC 29148 / DSM 2079 / JCM 5827 / CCUG 10774 / NCTC 10582 / VPI-5482 / E50).